We begin with the raw amino-acid sequence, 36 residues long: Phosphoglycerate kinase, chloroplastic (36 aa).

(2R)-3-phosphoglycerate is bound by residues Ala22, Asp23, and Asn25.

The protein belongs to the phosphoglycerate kinase family. As to quaternary structure, monomer. Mg(2+) is required as a cofactor.

The protein resides in the plastid. Its subcellular location is the chloroplast. The enzyme catalyses (2R)-3-phosphoglycerate + ATP = (2R)-3-phospho-glyceroyl phosphate + ADP. Its pathway is carbohydrate biosynthesis; Calvin cycle. This chain is Phosphoglycerate kinase, chloroplastic, found in Scenedesmus fuscus (Green alga).